The following is a 296-amino-acid chain: Glycine--tRNA ligase alpha subunit (296 aa).

It belongs to the class-II aminoacyl-tRNA synthetase family. Tetramer of two alpha and two beta subunits.

The protein resides in the cytoplasm. The enzyme catalyses tRNA(Gly) + glycine + ATP = glycyl-tRNA(Gly) + AMP + diphosphate. The protein is Glycine--tRNA ligase alpha subunit of Listeria welshimeri serovar 6b (strain ATCC 35897 / DSM 20650 / CCUG 15529 / CIP 8149 / NCTC 11857 / SLCC 5334 / V8).